Consider the following 565-residue polypeptide: MAVASSPEKDQPLLQLQKVDSSRVGGQVLSPTLSSSLETSQPICITSPYTDLGHDFPTIPFYSPTIFSYAGPSISDCTSVHQSLNPSLFWPSRGHMGSPIPLHHSQHGQPIQSPWVEISPLDNVLKTKQDGASLPLAVVPVRHKSARRRSQESEEAVVTSGGKTDLHYCAVCHDYASGYHYGVWSCEGCKAFFKRSIQRDNEYICPATNECTIDKNRRKSCQACRLRKCYEVGMTKCGMRKERGNYRSPQMRRMTRLTSQGRTDSSSVLTGSAVVSLNAPQPSALTSEQLIERLMEAEPPEIYLMKDMKKPLTEAKVMMSLTNLADKELVHMITWAKKIPGFVELGLLDQVHLLECCWLEVLMVGLMWRSVDHPGKLVFSPDLSLSREEGSCVQGFAEIFDMLLAATSRVRELKLQREEYVCLKAMILLNSNMCLSSSESSSKLLRLLDAVTDALVSAIGKTVLSFRQQYTRLAHLLMLLSHIRHVSNKGMDHLHCMKMKNMVPLYDLLLEMLDAHIMHSSRLPRRSPEQEPEDQADAPAPPHSSGSGPSYTWTPSSSEGAGEPQ.

Positions 1-168 (MAVASSPEKD…TSGGKTDLHY (168 aa)) are modulating. NR C4-type zinc fingers lie at residues 169-189 (CAVC…CEGC) and 205-229 (CPAT…LRKC). A DNA-binding region (nuclear receptor) is located at residues 169-234 (CAVCHDYASG…RLRKCYEVGM (66 aa)). Positions 235-285 (TKCGMRKERGNYRSPQMRRMTRLTSQGRTDSSSVLTGSAVVSLNAPQPSAL) are hinge. Residues 286–516 (TSEQLIERLM…DLLLEMLDAH (231 aa)) form the NR LBD domain. The interval 522–565 (RLPRRSPEQEPEDQADAPAPPHSSGSGPSYTWTPSSSEGAGEPQ) is disordered.

The protein belongs to the nuclear hormone receptor family. NR3 subfamily. As to quaternary structure, homodimer. Abundant in the ovary and testes, barely detectable in the brain and muscle and undetectable in the liver.

It is found in the nucleus. The steroid hormones and their receptors are involved in the regulation of eukaryotic gene expression and affect cellular proliferation and differentiation in target tissues. This Micropogonias undulatus (Atlantic croaker) protein is Estrogen receptor gamma (esr3).